A 520-amino-acid polypeptide reads, in one-letter code: GMP synthase [glutamine-hydrolyzing] (520 aa).

The region spanning 9–202 is the Glutamine amidotransferase type-1 domain; sequence TVLIVDFGSQ…VHKIAGIKGD (194 aa). Cysteine 86 serves as the catalytic Nucleophile. Catalysis depends on residues histidine 176 and glutamate 178. The GMPS ATP-PPase domain maps to 203 to 395; sequence WTMSAYRAKA…LGLPESFIGR (193 aa). 230–236 provides a ligand contact to ATP; the sequence is SGGVDSS.

As to quaternary structure, homodimer.

It catalyses the reaction XMP + L-glutamine + ATP + H2O = GMP + L-glutamate + AMP + diphosphate + 2 H(+). It functions in the pathway purine metabolism; GMP biosynthesis; GMP from XMP (L-Gln route): step 1/1. Functionally, catalyzes the synthesis of GMP from XMP. The polypeptide is GMP synthase [glutamine-hydrolyzing] (Sinorhizobium fredii (strain NBRC 101917 / NGR234)).